The chain runs to 179 residues: Adenine phosphoribosyltransferase (179 aa).

The protein belongs to the purine/pyrimidine phosphoribosyltransferase family. Homodimer.

The protein localises to the cytoplasm. It carries out the reaction AMP + diphosphate = 5-phospho-alpha-D-ribose 1-diphosphate + adenine. It participates in purine metabolism; AMP biosynthesis via salvage pathway; AMP from adenine: step 1/1. Functionally, catalyzes a salvage reaction resulting in the formation of AMP, that is energically less costly than de novo synthesis. In Azorhizobium caulinodans (strain ATCC 43989 / DSM 5975 / JCM 20966 / LMG 6465 / NBRC 14845 / NCIMB 13405 / ORS 571), this protein is Adenine phosphoribosyltransferase.